The primary structure comprises 224 residues: Germin-like protein 8-4 (224 aa).

Positions 1–23 (MASSSSLYLLAALLALASWQAIA) are cleaved as a signal peptide. Cysteine 33 and cysteine 48 are joined by a disulfide. The Cupin type-1 domain occupies 70–213 (STMNKVGSNV…AFQVEKKVID (144 aa)). N-linked (GlcNAc...) asparagine glycosylation is present at asparagine 78. Mn(2+) contacts are provided by histidine 111, histidine 113, glutamate 118, and histidine 158.

The protein belongs to the germin family. In terms of assembly, oligomer (believed to be a pentamer but probably hexamer).

It localises to the secreted. It is found in the extracellular space. The protein resides in the apoplast. Functionally, plays a role in broad-spectrum disease resistance. Probably has no oxalate oxidase activity even if the active site is conserved. This chain is Germin-like protein 8-4 (GER1), found in Oryza sativa subsp. japonica (Rice).